A 214-amino-acid polypeptide reads, in one-letter code: Adenylate kinase (214 aa).

Residue 10–15 (GAGKGT) participates in ATP binding. The interval 30–59 (STGDMFRAAIKEGTELGKQAKALMDEGKLV) is NMP. AMP is bound by residues Thr-31, Arg-36, 57–59 (KLV), 85–88 (GFPR), and Gln-92. The LID stretch occupies residues 122–159 (GRRVHQPSGRTYHVVYNPPKVEGKDDVTGEDLIIRQDD). ATP is bound by residues Arg-123 and 132–133 (TY). 2 residues coordinate AMP: Arg-156 and Arg-167. Lys-200 is an ATP binding site.

It belongs to the adenylate kinase family. As to quaternary structure, monomer.

The protein resides in the cytoplasm. It carries out the reaction AMP + ATP = 2 ADP. The protein operates within purine metabolism; AMP biosynthesis via salvage pathway; AMP from ADP: step 1/1. Functionally, catalyzes the reversible transfer of the terminal phosphate group between ATP and AMP. Plays an important role in cellular energy homeostasis and in adenine nucleotide metabolism. In Actinobacillus pleuropneumoniae serotype 5b (strain L20), this protein is Adenylate kinase.